The chain runs to 285 residues: Ribosomal RNA small subunit methyltransferase A (285 aa).

Positions 21, 23, 48, 69, 94, and 127 each coordinate S-adenosyl-L-methionine.

The protein belongs to the class I-like SAM-binding methyltransferase superfamily. rRNA adenine N(6)-methyltransferase family. RsmA subfamily.

The protein resides in the cytoplasm. It carries out the reaction adenosine(1518)/adenosine(1519) in 16S rRNA + 4 S-adenosyl-L-methionine = N(6)-dimethyladenosine(1518)/N(6)-dimethyladenosine(1519) in 16S rRNA + 4 S-adenosyl-L-homocysteine + 4 H(+). Its function is as follows. Specifically dimethylates two adjacent adenosines (A1518 and A1519) in the loop of a conserved hairpin near the 3'-end of 16S rRNA in the 30S particle. May play a critical role in biogenesis of 30S subunits. This Koribacter versatilis (strain Ellin345) protein is Ribosomal RNA small subunit methyltransferase A.